We begin with the raw amino-acid sequence, 1251 residues long: Phospholipid-transporting ATPase IC (1251 aa).

Positions 1-54 (MSTERDSETTFDEDSQPNDEVVPYSDDETEDELDDQGSAVEPEQNRVNREAEEN) are disordered. Over 1-108 (MSTERDSETT…TYKYNAFTFI (108 aa)) the chain is Cytoplasmic. Residues 25 to 35 (SDDETEDELDD) show a composition bias toward acidic residues. A compositionally biased stretch (basic and acidic residues) spans 43–54 (EQNRVNREAEEN). The helical transmembrane segment at 109 to 130 (PMNLFEQFKRAANLYFLALLIL) threads the bilayer. Topologically, residues 131–136 (QAVPQI) are exoplasmic loop. A helical membrane pass occupies residues 137 to 156 (STLAWYTTLVPLLVVLGVTA). Topologically, residues 157 to 340 (IKDLVDDVAR…TKIDYLMNYM (184 aa)) are cytoplasmic. Residues 341-362 (VYTIFVVLILLSAGLAIGHAYW) traverse the membrane as a helical segment. Topologically, residues 363-389 (EAQVGNSSWYLYDGEDDTPSYRGFLIF) are exoplasmic loop. Residues 390-411 (WGYIIVLNTMVPISLYVSVEVI) traverse the membrane as a helical segment. Topologically, residues 412-949 (RLGQSHFINW…GRWSYIRMCK (538 aa)) are cytoplasmic. Catalysis depends on aspartate 454, which acts as the 4-aspartylphosphate intermediate. Aspartate 454, lysine 455, threonine 456, glutamate 555, phenylalanine 596, lysine 619, arginine 652, threonine 732, glycine 733, aspartate 734, arginine 867, and lysine 873 together coordinate ATP. Aspartate 454 is a Mg(2+) binding site. Threonine 456 provides a ligand contact to Mg(2+). Aspartate 893 contacts Mg(2+). ATP-binding residues include asparagine 896 and aspartate 897. Residue aspartate 897 coordinates Mg(2+). The chain crosses the membrane as a helical span at residues 950–970 (FLRYFFYKNFAFTLVHFWYSF). The Exoplasmic loop portion of the chain corresponds to 971 to 982 (FNGYSAQTAYED). The helical transmembrane segment at 983–1002 (WFITLYNVLYTSLPVLLMGL) threads the bilayer. At 1003-1032 (LDQDVSDKLSLRFPGLYIVGQRDLLFNYKR) the chain is on the cytoplasmic side. Residues 1033-1054 (FFVSLLHGVLTSMILFFIPLGA) form a helical membrane-spanning segment. Topologically, residues 1055 to 1068 (YLQTVGQDGEAPSD) are exoplasmic loop. A helical membrane pass occupies residues 1069–1091 (YQSFAVTIASALVITVNFQIGLD). At 1092 to 1097 (TSYWTF) the chain is on the cytoplasmic side. The chain crosses the membrane as a helical span at residues 1098–1118 (VNAFSIFGSIALYFGIMFDFH). Residues 1119–1138 (SAGIHVLFPSAFQFTGTASN) lie on the Exoplasmic loop side of the membrane. The chain crosses the membrane as a helical span at residues 1139–1163 (ALRQPYIWLTIILAVAVCLLPVVAI). Residues 1164–1251 (RFLSMTIWPS…TAEYRRTGDS (88 aa)) are Cytoplasmic-facing. At serine 1223 the chain carries Phosphoserine.

Belongs to the cation transport ATPase (P-type) (TC 3.A.3) family. Type IV subfamily. As to quaternary structure, component of a P4-ATPase flippase complex which consists of a catalytic alpha subunit ATP8B1 and an accessory beta subunit TMEM30A. The flippase ATP8B1:TMEM30A complex can form an intermediate phosphoenzyme in vitro. Also interacts with beta subunit TMEM30B. It depends on Mg(2+) as a cofactor. In terms of tissue distribution, found in most tissues except brain and skeletal muscle. Most abundant in pancreas and small intestine.

The protein resides in the cell membrane. It is found in the apical cell membrane. It localises to the cell projection. The protein localises to the stereocilium. Its subcellular location is the endoplasmic reticulum. The protein resides in the golgi apparatus. The enzyme catalyses ATP + H2O + phospholipidSide 1 = ADP + phosphate + phospholipidSide 2.. It carries out the reaction a 1,2-diacyl-sn-glycero-3-phosphocholine(out) + ATP + H2O = a 1,2-diacyl-sn-glycero-3-phosphocholine(in) + ADP + phosphate + H(+). The catalysed reaction is a 1,2-diacyl-sn-glycero-3-phospho-L-serine(out) + ATP + H2O = a 1,2-diacyl-sn-glycero-3-phospho-L-serine(in) + ADP + phosphate + H(+). Functionally, catalytic component of a P4-ATPase flippase complex which catalyzes the hydrolysis of ATP coupled to the transport of phospholipids, in particular phosphatidylcholines (PC), from the outer to the inner leaflet of the plasma membrane. May participate in the establishment of the canalicular membrane integrity by ensuring asymmetric distribution of phospholipids in the canicular membrane. Thus may have a role in the regulation of bile acids transport into the canaliculus, uptake of bile acids from intestinal contents into intestinal mucosa or both and protect hepatocytes from bile salts. Involved in the microvillus formation in polarized epithelial cells; the function seems to be independent from its flippase activity. Participates in correct apical membrane localization of CDC42, CFTR and SLC10A2. Enables CDC42 clustering at the apical membrane during enterocyte polarization through the interaction between CDC42 polybasic region and negatively charged membrane lipids provided by ATP8B1. Together with TMEM30A is involved in uptake of the synthetic drug alkylphospholipid perifosine. Required for the preservation of cochlear hair cells in the inner ear. May act as cardiolipin transporter during inflammatory injury. In Homo sapiens (Human), this protein is Phospholipid-transporting ATPase IC.